The chain runs to 622 residues: Serine/threonine-protein kinase MAK (622 aa).

One can recognise a Protein kinase domain in the interval 4 to 284 (YTTMRQLGDG…ASQALKHPYF (281 aa)). ATP contacts are provided by residues 10-18 (LGDGTYGSV) and K33. The active-site Proton acceptor is the D125. T157 bears the Phosphothreonine; by autocatalysis mark. Y159 carries the post-translational modification Phosphotyrosine; by autocatalysis. Residues 301-373 (QTLHKQLQPP…HHKQPQTMFP (73 aa)) form a disordered region.

It belongs to the protein kinase superfamily. CMGC Ser/Thr protein kinase family. CDC2/CDKX subfamily. As to quaternary structure, interacts with RP1. Interacts with AR and CDK20. Found in a complex containing MAK, AR and NCOA3. Interacts with FZR1 (via WD repeats). The cofactor is Mg(2+). Autophosphorylated. Phosphorylated on serine and threonine residues. As to expression, expressed mainly in testicular cells at and after meiosis.

It localises to the nucleus. The protein localises to the cytoplasm. Its subcellular location is the cytoskeleton. It is found in the microtubule organizing center. The protein resides in the centrosome. It localises to the spindle. The protein localises to the midbody. Its subcellular location is the cell projection. It is found in the cilium. The protein resides in the photoreceptor outer segment. It localises to the photoreceptor inner segment. It carries out the reaction L-seryl-[protein] + ATP = O-phospho-L-seryl-[protein] + ADP + H(+). The catalysed reaction is L-threonyl-[protein] + ATP = O-phospho-L-threonyl-[protein] + ADP + H(+). Functionally, essential for the regulation of ciliary length and required for the long-term survival of photoreceptors. Could play an important function in spermatogenesis. Phosphorylates FZR1 in a cell cycle-dependent manner. Plays a role in the transcriptional coactivation of AR. The chain is Serine/threonine-protein kinase MAK (Mak) from Rattus norvegicus (Rat).